A 407-amino-acid polypeptide reads, in one-letter code: Peptidase T (407 aa).

Residue H82 participates in Zn(2+) binding. D84 is an active-site residue. Zn(2+) is bound at residue D143. Residue E177 is the Proton acceptor of the active site. 3 residues coordinate Zn(2+): E178, D200, and H382.

It belongs to the peptidase M20B family. Zn(2+) is required as a cofactor.

The protein localises to the cytoplasm. The catalysed reaction is Release of the N-terminal residue from a tripeptide.. Its function is as follows. Cleaves the N-terminal amino acid of tripeptides. This chain is Peptidase T, found in Streptococcus uberis (strain ATCC BAA-854 / 0140J).